Reading from the N-terminus, the 71-residue chain is High-potential iron-sulfur protein isozyme 2 (71 aa).

Residues Cys34, Cys37, Cys51, and Cys65 each contribute to the [4Fe-4S] cluster site.

This sequence belongs to the high-potential iron-sulfur protein (HiPIP) family. As to quaternary structure, homodimer.

Specific class of high-redox-potential 4Fe-4S ferredoxins. Functions in anaerobic electron transport in most purple and in some other photosynthetic bacteria and in at least one genus (Paracoccus) of halophilic, denitrifying bacteria. The protein is High-potential iron-sulfur protein isozyme 2 (hip2) of Ectothiorhodospira shaposhnikovii (Ectothiorhodospira vacuolata).